A 225-amino-acid polypeptide reads, in one-letter code: Enolase-phosphatase E1 (225 aa).

Belongs to the HAD-like hydrolase superfamily. MasA/MtnC family. As to quaternary structure, monomer. Mg(2+) is required as a cofactor.

It carries out the reaction 5-methylsulfanyl-2,3-dioxopentyl phosphate + H2O = 1,2-dihydroxy-5-(methylsulfanyl)pent-1-en-3-one + phosphate. The protein operates within amino-acid biosynthesis; L-methionine biosynthesis via salvage pathway; L-methionine from S-methyl-5-thio-alpha-D-ribose 1-phosphate: step 3/6. It functions in the pathway amino-acid biosynthesis; L-methionine biosynthesis via salvage pathway; L-methionine from S-methyl-5-thio-alpha-D-ribose 1-phosphate: step 4/6. In terms of biological role, bifunctional enzyme that catalyzes the enolization of 2,3-diketo-5-methylthiopentyl-1-phosphate (DK-MTP-1-P) into the intermediate 2-hydroxy-3-keto-5-methylthiopentenyl-1-phosphate (HK-MTPenyl-1-P), which is then dephosphorylated to form the acireductone 1,2-dihydroxy-3-keto-5-methylthiopentene (DHK-MTPene). The sequence is that of Enolase-phosphatase E1 from Shewanella woodyi (strain ATCC 51908 / MS32).